The sequence spans 401 residues: Adaptive-response sensory kinase SasA (401 aa).

Positions 175–400 constitute a Histidine kinase domain; sequence MLVHDLRNPL…WFHFTLPVYP (226 aa). H178 is subject to Phosphohistidine; by autocatalysis.

As to quaternary structure, homooligomerizes. Interacts with KaiC. Participates in the KaiABC clock complex, whose core is composed of a KaiC homohexamer, 6 KaiB and up to 6 KaiA dimers. SasA and KaiB(fs) compete to bind to KaiC.

It carries out the reaction ATP + protein L-histidine = ADP + protein N-phospho-L-histidine.. Its function is as follows. Member of the two-component regulatory system SasA/RpaA involved in genome-wide circadian gene expression. One of several clock output pathways. Participates in the Kai clock protein complex, the main circadian regulator in cyanobacteria, via its interaction with KaiC. KaiC enhances the autophosphorylation activity of SasA, which then transfers its phosphate group to RpaA to activate it. In addition to its output function, recruits fold-shifted KaiB (KaiB(fs)) to KaiC to cooperatively form the KaiB(6):KaiC(6) complex (independent of SasA kinase activity). Required for robustness of the circadian rhythm of gene expression and is involved in clock output, also required for adaptation to light/dark cycles. This is Adaptive-response sensory kinase SasA from Trichormus variabilis (strain ATCC 29413 / PCC 7937) (Anabaena variabilis).